Here is a 263-residue protein sequence, read N- to C-terminus: Interleukin-15 receptor subunit alpha (263 aa).

An N-terminal signal peptide occupies residues 1–32 (MASPQLRGYGVQAIPVLLLLLLLLLLPLRVTP). The Extracellular portion of the chain corresponds to 33–205 (GTTCPPPVSI…ISPHSSKMTK (173 aa)). The Sushi domain maps to 34 to 98 (TTCPPPVSIE…WTTPSLKCIR (65 aa)). 2 disulfide bridges follow: Cys-36–Cys-78 and Cys-62–Cys-96. N-linked (GlcNAc...) asparagine glycosylation is present at Asn-51. Residues 113 to 135 (TPKVTSQPESPSPSAKEPEAFSP) are compositionally biased toward low complexity. Positions 113-178 (TPKVTSQPES…HKSSRAPSLA (66 aa)) are disordered. Positions 136-145 (KSDTAMTTET) are enriched in polar residues. Residues 154-169 (TPSQTTSAGTTGTGSH) show a composition bias toward low complexity. A helical transmembrane segment spans residues 206–226 (VAISTSVLLVGAGVVMAFLAW). Topologically, residues 227-263 (YIKSRQPSQPCRVEVETMETVPMTVRASSKEDEDTGA) are cytoplasmic.

The interleukin-15 receptor IL15R is a heterotrimer of IL15RA, IL2RB and IL2RG. IL15RA also self-associates. Interacts with SYK. Post-translationally, N-glycosylated and O-glycosylated. In terms of processing, a soluble form (sIL-15RA) arises from proteolytic shedding of the membrane-anchored receptor. It also binds IL15 and thus interferes with IL15 binding to the membrane receptor. Widely expressed.

Its subcellular location is the membrane. It is found in the nucleus membrane. The protein localises to the cell surface. The protein resides in the secreted. It localises to the extracellular space. High-affinity receptor for interleukin-15. Can signal both in cis and trans where IL15R from one subset of cells presents IL15 to neighboring IL2RG-expressing cells. In neutrophils, binds and activates kinase SYK in response to IL15 stimulation. In neutrophils, required for IL15-induced phagocytosis in a SYK-dependent manner. This is Interleukin-15 receptor subunit alpha (Il15ra) from Mus musculus (Mouse).